Reading from the N-terminus, the 81-residue chain is Putative membrane protein insertion efficiency factor (81 aa).

This sequence belongs to the UPF0161 family.

The protein localises to the cell inner membrane. In terms of biological role, could be involved in insertion of integral membrane proteins into the membrane. The polypeptide is Putative membrane protein insertion efficiency factor (Pseudomonas syringae pv. syringae (strain B728a)).